We begin with the raw amino-acid sequence, 112 residues long: Cell cycle protein GpsB (112 aa).

Positions 38 to 72 form a coiled coil; it reads IKDYEAFHKEFEQLKQQNARLKRELEEQKLVATQV.

It belongs to the GpsB family. As to quaternary structure, forms polymers through the coiled coil domains. Interacts with PBP1, MreC and EzrA.

The protein resides in the cytoplasm. Divisome component that associates with the complex late in its assembly, after the Z-ring is formed, and is dependent on DivIC and PBP2B for its recruitment to the divisome. Together with EzrA, is a key component of the system that regulates PBP1 localization during cell cycle progression. Its main role could be the removal of PBP1 from the cell pole after pole maturation is completed. Also contributes to the recruitment of PBP1 to the division complex. Not essential for septum formation. In Bacillus cereus (strain ZK / E33L), this protein is Cell cycle protein GpsB.